Here is a 670-residue protein sequence, read N- to C-terminus: DUF724 domain-containing protein 1 (670 aa).

2 disordered regions span residues histidine 283–proline 315 and alanine 368–aspartate 445. Composition is skewed to polar residues over residues serine 294–glycine 309, arginine 379–methionine 392, and cysteine 426–asparagine 442. In terms of domain architecture, DUF724 spans proline 484–proline 669.

In terms of tissue distribution, expressed in stems and flowers.

It localises to the nucleus. May be involved in the polar growth of plant cells via transportation of RNAs. In Arabidopsis thaliana (Mouse-ear cress), this protein is DUF724 domain-containing protein 1.